The primary structure comprises 96 residues: UPF0235 protein YPK_0828 (96 aa).

It belongs to the UPF0235 family.

The sequence is that of UPF0235 protein YPK_0828 from Yersinia pseudotuberculosis serotype O:3 (strain YPIII).